The following is a 504-amino-acid chain: Probable cytochrome P450 513F1 (504 aa).

The chain crosses the membrane as a helical span at residues 1–21 (MILSLLFLFVITLYFLIPSRI). Cys-449 provides a ligand contact to heme.

This sequence belongs to the cytochrome P450 family. Requires heme as cofactor.

Its subcellular location is the membrane. This is Probable cytochrome P450 513F1 (cyp513F1) from Dictyostelium discoideum (Social amoeba).